Reading from the N-terminus, the 343-residue chain is Methionine import ATP-binding protein MetN (343 aa).

An ABC transporter domain is found at 2-241 (IKLSNITKVF…PKTPLAQKFI (240 aa)). ATP is bound at residue 38 to 45 (GASGAGKS).

Belongs to the ABC transporter superfamily. Methionine importer (TC 3.A.1.24) family. The complex is composed of two ATP-binding proteins (MetN), two transmembrane proteins (MetI) and a solute-binding protein (MetQ).

Its subcellular location is the cell inner membrane. The enzyme catalyses L-methionine(out) + ATP + H2O = L-methionine(in) + ADP + phosphate + H(+). It carries out the reaction D-methionine(out) + ATP + H2O = D-methionine(in) + ADP + phosphate + H(+). Functionally, part of the ABC transporter complex MetNIQ involved in methionine import. Responsible for energy coupling to the transport system. This is Methionine import ATP-binding protein MetN from Shigella flexneri serotype 5b (strain 8401).